We begin with the raw amino-acid sequence, 194 residues long: Small ribosomal subunit protein uS5 (194 aa).

The region spanning 26–89 (LEEKVVEIRR…ADAKKRIIKV (64 aa)) is the S5 DRBM domain.

Belongs to the universal ribosomal protein uS5 family. Part of the 30S ribosomal subunit. Contacts proteins S4 and S8.

With S4 and S12 plays an important role in translational accuracy. Functionally, located at the back of the 30S subunit body where it stabilizes the conformation of the head with respect to the body. This chain is Small ribosomal subunit protein uS5, found in Sulfurihydrogenibium sp. (strain YO3AOP1).